The chain runs to 1022 residues: ATPase MORC2B (1022 aa).

At A2 the chain carries N-acetylalanine. Residues N39, 87-89, and 99-105 contribute to the ATP site; these read SAK and RYGNGLK. Position 39 (N39) interacts with Mg(2+). A coiled-coil region spans residues 285–362; it reads KTRAEQEVKK…RDAKQQALKE (78 aa). K427 is a binding site for ATP. The CW-type zinc finger occupies 490–544; sequence AMQVPTTIQCDLCLKWRTLPFQLSAVEEGYPINWVCSMNPDPEQDQCEAFELKQK. The Zn(2+) site is built by C499, C502, C525, and C536. Residues 555–583 adopt a coiled-coil conformation; that stretch reads KTQEERQKQLTEKIQQEQRKLKALKKIKP. Phosphoserine is present on S615. Residue K649 forms a Glycyl lysine isopeptide (Lys-Gly) (interchain with G-Cter in SUMO2) linkage. A phosphoserine mark is found at S690, S724, S733, and S737. Residue K758 forms a Glycyl lysine isopeptide (Lys-Gly) (interchain with G-Cter in SUMO2) linkage. Phosphoserine occurs at positions 768 and 770. T827 carries the phosphothreonine modification. Phosphoserine occurs at positions 846 and 851. K922 participates in a covalent cross-link: Glycyl lysine isopeptide (Lys-Gly) (interchain with G-Cter in SUMO2). Positions 962-1001 form a coiled coil; sequence QAKVSEESLRISQKKLQETEEKLQKLRTNIQTLLQMAQQG.

In terms of assembly, interacts with Morc2a. As to expression, protein is abundant in testes but not detected in other adult tissues examined (at protein level). Detected in germ cells with a distinct developmental-specific expression pattern but not in somatic cells such as Sertoli cells.

The protein resides in the nucleus. It catalyses the reaction ATP + H2O = ADP + phosphate + H(+). Its function is as follows. Required for chromosomal synapsis and meiotic recombination in males and females. In Mus musculus (Mouse), this protein is ATPase MORC2B.